A 175-amino-acid polypeptide reads, in one-letter code: Cell number regulator 9 (175 aa).

The next 2 membrane-spanning stretches (helical) occupy residues 53-73 (GLCCLTCWCPCITFGRIAEIV) and 80-100 (CGVAGTIYTLLACFTGCHWIY).

It belongs to the cornifelin family. As to expression, expressed in roots, coleoptiles, leaves and stalks.

It localises to the membrane. In Zea mays (Maize), this protein is Cell number regulator 9 (CNR9).